The following is a 379-amino-acid chain: Queuine tRNA-ribosyltransferase (379 aa).

Residue aspartate 95 is the Proton acceptor of the active site. Substrate contacts are provided by residues 95–99 (DSGGF), aspartate 149, glutamine 197, and glycine 224. An RNA binding region spans residues 255-261 (GVGMPAE). The active-site Nucleophile is the aspartate 274. Cysteine 312, cysteine 314, cysteine 317, and histidine 343 together coordinate Zn(2+).

Belongs to the queuine tRNA-ribosyltransferase family. In terms of assembly, homodimer. Within each dimer, one monomer is responsible for RNA recognition and catalysis, while the other monomer binds to the replacement base PreQ1. Zn(2+) serves as cofactor.

It carries out the reaction 7-aminomethyl-7-carbaguanine + guanosine(34) in tRNA = 7-aminomethyl-7-carbaguanosine(34) in tRNA + guanine. The protein operates within tRNA modification; tRNA-queuosine biosynthesis. Functionally, catalyzes the base-exchange of a guanine (G) residue with the queuine precursor 7-aminomethyl-7-deazaguanine (PreQ1) at position 34 (anticodon wobble position) in tRNAs with GU(N) anticodons (tRNA-Asp, -Asn, -His and -Tyr). Catalysis occurs through a double-displacement mechanism. The nucleophile active site attacks the C1' of nucleotide 34 to detach the guanine base from the RNA, forming a covalent enzyme-RNA intermediate. The proton acceptor active site deprotonates the incoming PreQ1, allowing a nucleophilic attack on the C1' of the ribose to form the product. After dissociation, two additional enzymatic reactions on the tRNA convert PreQ1 to queuine (Q), resulting in the hypermodified nucleoside queuosine (7-(((4,5-cis-dihydroxy-2-cyclopenten-1-yl)amino)methyl)-7-deazaguanosine). This is Queuine tRNA-ribosyltransferase from Solibacter usitatus (strain Ellin6076).